Here is a 1040-residue protein sequence, read N- to C-terminus: MGAPARKRASLLLLLLATMALVSSPGWSFSQGTPATFGPVFEEQPVGLLFPEESAEDQVTLACRARASPPATYRWKMNGTEMNLEPGSRHQLMGGNLVIMSPTKAQDAGVYQCLASNPVGTVVSKEAVLRFGFLQEFSKEERDPVKTHEGWGVMLPCNPPAHYPGLSYRWLLNEFPNFIPTDGRHFVSQTTGNLYIARTNASDLGNYSCLATSHLDFSTKSVFSKFAQLNLAAEDPRLFAPSIKARFPPETYALVGQQVTLECFAFGNPVPRIKWRKVDGSLSPQWGTAEPTLQIPSVSFEDEGTYECEAENSKGRDTVQGRIIVQAQPEWLKVISDTEADIGSNLRWGCAAAGKPRPMVRWLRNGEPLASQNRVEVLAGDLRFSKLNLEDSGMYQCVAENKHGTIYASAELAVQALAPDFRQNPVRRLIPAARGGEISIPCQPRAAPKATILWSKGTEILGNSTRVTVTLDGTLIIRNISRSDEGKYTCFAENFMGKANSTGILSVRDATKITLAPSSADINVGDNLTLQCHASHDPTMDLTFTWTLDDFPVDFDKPGGHYRRASVKETIGDLTILNAQLRHGGTYTCMAQTVVDGASKEATVLVRGPPGPPGGVVVRDIGDTTVQLSWSRGFDNHSPIAKYTLQARTPPSGKWKQVRTNPVNIEGNAETAQVLGLMPWMDYEFRVSASNILGTGEPSGPSSRIRTKEAVPSVAPSGLSGGGGAPGELTINWTPMSREYQNGDGFGYLLSFRRQGSSSWQTARVPGADTQYFVYSNDSIHPYTPFEVKIRSYNRRGDGPESLTAIVYSAEEEPKVAPAKVWAKGSSSSEMNVSWEPVLQDMNGILLGYEIRYWKAGDKEAAADRVRTAGLDSSARVTGLYPNTKYHVTVRAYNRAGTGPASPSADAMTMKPPPRRPPGNISWTFSSSSLSLKWDPVVPLRNESTVTGYKMLYQNDLQPTPMLHLTSKNWIEIPVPEDIGHALVQIRTTGPGGDGIPAEVHIVRNGGTSMMVESSAVRPAHPGPVFSCMVILMLAGCQRL.

Residues 1–30 (MGAPARKRASLLLLLLATMALVSSPGWSFS) form the signal peptide. Ig-like C2-type domains lie at 39-130 (PVFE…AVLR), 135-224 (QEFS…SVFS), 241-324 (PSIK…GRII), 329-413 (PEWL…AELA), 419-506 (PDFR…GILS), and 511-605 (TKIT…ATVL). Disulfide bonds link cysteine 63/cysteine 113, cysteine 157/cysteine 209, cysteine 263/cysteine 308, and cysteine 350/cysteine 397. N-linked (GlcNAc...) asparagine glycans are attached at residues asparagine 78, asparagine 200, and asparagine 206. Residues asparagine 463, asparagine 479, asparagine 500, and asparagine 527 are each glycosylated (N-linked (GlcNAc...) asparagine). Fibronectin type-III domains lie at 612–710 (PPGG…TKEA), 715–812 (APSG…SAEE), 817–913 (APAK…MKPP), and 917–1008 (PPGN…NGGT). Residue asparagine 777 is glycosylated (N-linked (GlcNAc...) asparagine). The Cell attachment site motif lies at 796 to 798 (RGD). N-linked (GlcNAc...) asparagine glycosylation is found at asparagine 832, asparagine 920, and asparagine 942. The tract at residues 897–922 (GTGPASPSADAMTMKPPPRRPPGNIS) is disordered. Residue serine 1014 is the site of GPI-anchor amidated serine attachment. The propeptide at 1015 to 1040 (SAVRPAHPGPVFSCMVILMLAGCQRL) is removed in mature form.

This sequence belongs to the immunoglobulin superfamily. Contactin family.

It localises to the cell membrane. In conjunction with another transmembrane protein, CNTNAP2, contributes to the organization of axonal domains at nodes of Ranvier by maintaining voltage-gated potassium channels at the juxtaparanodal region. The protein is Contactin-2 (Cntn2) of Mus musculus (Mouse).